The chain runs to 94 residues: PqqA binding protein (94 aa).

Belongs to the PqqD family. In terms of assembly, monomer. Interacts with PqqE.

Its pathway is cofactor biosynthesis; pyrroloquinoline quinone biosynthesis. Functionally, functions as a PqqA binding protein and presents PqqA to PqqE, in the pyrroloquinoline quinone (PQQ) biosynthetic pathway. This chain is PqqA binding protein, found in Pseudomonas syringae pv. syringae (strain B728a).